The chain runs to 278 residues: Multidrug-efflux transporter 1 regulator (278 aa).

The HTH merR-type domain maps to 5–75 (YYSIGEVSKL…LEEMKKAQDL (71 aa)). Residues 8–27 (IGEVSKLANVSIKALRYYDK) constitute a DNA-binding region (H-T-H motif).

In terms of assembly, binds DNA as a homodimer.

In terms of biological role, activates transcription of the bmr gene in response to structurally dissimilar drugs. Binds rhodamine as an inducer. The sequence is that of Multidrug-efflux transporter 1 regulator (bmrR) from Bacillus subtilis (strain 168).